The sequence spans 511 residues: Adenosine deaminase 2 (511 aa).

Positions 1 to 29 (MLVDGPSEWPALRFLLLAVAMSFFGSALS) are cleaved as a signal peptide. The interval 30 to 100 (IDETRAHLLL…HLIERSQVFN (71 aa)) is dimerization. Zn(2+)-binding residues include His-112 and His-114. Asp-115 contacts substrate. Asn-127 is a glycosylation site (N-linked (GlcNAc...) asparagine). Positions 127–185 (NVTYRPHCHICFTPKGIMQFRFAHPTPRTSEKCSKWILLEDYRKRVQNVTEFDDSLLRN) are PRB domain. Cys-137 and Cys-159 are joined by a disulfide. N-linked (GlcNAc...) asparagine glycosylation is found at Asn-174 and Asn-185. Substrate is bound by residues 204–211 (WSKFETIF), His-293, and Gly-326. Position 356 (His-356) interacts with Zn(2+). Catalysis depends on Glu-359, which acts as the Proton donor. The N-linked (GlcNAc...) asparagine glycan is linked to Asn-378. His-384 acts as the Proton acceptor in catalysis. Position 441 (Asp-441) interacts with Zn(2+). Asp-442 contacts substrate.

The protein belongs to the metallo-dependent hydrolases superfamily. Adenosine and AMP deaminases family. ADGF subfamily. Homodimer. Interacts with adenosine receptors. Binds heparin. Zn(2+) serves as cofactor.

It is found in the secreted. It catalyses the reaction adenosine + H2O + H(+) = inosine + NH4(+). Its function is as follows. Adenosine deaminase that may contribute to the degradation of extracellular adenosine, a signaling molecule that controls a variety of cellular responses. Requires elevated adenosine levels for optimal enzyme activity. Binds to cell surfaces via proteoglycans and may play a role in the regulation of cell proliferation and differentiation, independently of its enzyme activity. The protein is Adenosine deaminase 2 of Pongo abelii (Sumatran orangutan).